A 479-amino-acid polypeptide reads, in one-letter code: Anaerobic nitric oxide reductase flavorubredoxin (479 aa).

A zinc metallo-hydrolase region spans residues 30–210 (LRGSSYNSYL…PFSRLVTPKI (181 aa)). Residues His-79, Glu-81, Asp-83, His-147, Asp-166, and His-227 each contribute to the Fe cation site. The Flavodoxin-like domain maps to 254 to 393 (ITIFYDTMSN…LCRQHGRDIA (140 aa)). FMN is bound by residues 260–264 (TMSNN) and 342–369 (AFGS…EMSL). The Rubredoxin-like domain maps to 423-474 (GPKMQCSVCQWIYDPALGEPLQDVAPGTPWSDVPDNFLCPECSLGKDVFDVL). Cys-428, Cys-431, Cys-461, and Cys-464 together coordinate Fe cation.

The protein in the N-terminal section; belongs to the zinc metallo-hydrolase group 3 family. Homotetramer. Fe cation serves as cofactor. The cofactor is FMN.

Its subcellular location is the cytoplasm. It participates in nitrogen metabolism; nitric oxide reduction. Anaerobic nitric oxide reductase; uses NADH to detoxify nitric oxide (NO), protecting several 4Fe-4S NO-sensitive enzymes. Has at least 2 reductase partners, only one of which (NorW, flavorubredoxin reductase) has been identified. NO probably binds to the di-iron center; electrons enter from the NorW at rubredoxin and are transferred sequentially to the FMN center and the di-iron center. Also able to function as an aerobic oxygen reductase. The polypeptide is Anaerobic nitric oxide reductase flavorubredoxin (Salmonella typhi).